Consider the following 152-residue polypeptide: Endoribonuclease YbeY (152 aa).

Residues His118, His122, and His128 each contribute to the Zn(2+) site.

Belongs to the endoribonuclease YbeY family. Zn(2+) is required as a cofactor.

It localises to the cytoplasm. Functionally, single strand-specific metallo-endoribonuclease involved in late-stage 70S ribosome quality control and in maturation of the 3' terminus of the 16S rRNA. The polypeptide is Endoribonuclease YbeY (Pelotomaculum thermopropionicum (strain DSM 13744 / JCM 10971 / SI)).